Consider the following 218-residue polypeptide: uncharacterized protein (218 aa).

The Zn(2+) site is built by H57, H59, D61, H62, H138, D158, and H199.

The protein belongs to the metallo-beta-lactamase superfamily. Glyoxalase II family. Requires Zn(2+) as cofactor.

This is an uncharacterized protein from Mycobacterium leprae (strain TN).